Consider the following 209-residue polypeptide: Orotate phosphoribosyltransferase (209 aa).

Residues arginine 96, lysine 100, histidine 102, and glutamate 122 to serine 130 contribute to the 5-phospho-alpha-D-ribose 1-diphosphate site. Serine 126 contacts orotate.

This sequence belongs to the purine/pyrimidine phosphoribosyltransferase family. PyrE subfamily. In terms of assembly, homodimer. The cofactor is Mg(2+).

It carries out the reaction orotidine 5'-phosphate + diphosphate = orotate + 5-phospho-alpha-D-ribose 1-diphosphate. It functions in the pathway pyrimidine metabolism; UMP biosynthesis via de novo pathway; UMP from orotate: step 1/2. Its function is as follows. Catalyzes the transfer of a ribosyl phosphate group from 5-phosphoribose 1-diphosphate to orotate, leading to the formation of orotidine monophosphate (OMP). The sequence is that of Orotate phosphoribosyltransferase from Cytophaga hutchinsonii (strain ATCC 33406 / DSM 1761 / CIP 103989 / NBRC 15051 / NCIMB 9469 / D465).